We begin with the raw amino-acid sequence, 356 residues long: Arginine kinase (356 aa).

An N-acetylalanine modification is found at alanine 2. One can recognise a Phosphagen kinase N-terminal domain in the interval 9–91 (KLEAGFKKLE…FDPIIEDYHV (83 aa)). 64–68 (GVGIY) contributes to the L-arginine binding site. In terms of domain architecture, Phosphagen kinase C-terminal spans 119–356 (YVISTRVRCG…LELIKMEKEM (238 aa)). ATP-binding positions include 122 to 126 (STRVR) and histidine 185. L-arginine is bound at residue glutamate 225. Arginine 229 contacts ATP. Cysteine 271 is a binding site for L-arginine. Residues 280–284 (RASVH) and 309–314 (RGTRGE) each bind ATP. Glutamate 314 is a binding site for L-arginine.

The protein belongs to the ATP:guanido phosphotransferase family.

The enzyme catalyses L-arginine + ATP = N(omega)-phospho-L-arginine + ADP + H(+). The sequence is that of Arginine kinase from Penaeus monodon (Giant tiger prawn).